The sequence spans 1622 residues: MPARTAPARVPALASPAGSLPDHVRRRLKDLERDGLTEKECVKEKLNLLHEFLQTEIKSQLCDLETKLHKEELSEEGYLAKVKTLLNKDLCLENGTLSLTQKANGCPANGSRPTWKAEMADSNRSPRSRPKPRGPRRSKSDSETMIEASSSSVATRRTTRQTTITSHFKGPAKRKPKEDSEKGNANESAAEERDQDKKRRVAGTESRASRAGESVEKPERVRPGTQLCQEEQGEQEDDRRPRRQTRELASRRKSREDPDREARPGTHLDVDDDDEKDKRSSRPRSQPRDLATKRRPKEEVEQITPEPPEGKDEDEREEKRRKTTRKKPEPLSIPVQSRVERKASQGKASAIPKLNPPQCPECGQYLDDPDLKYQQHPVDAVDEPQMLTNEALSVFDSNSSWFETYDSSPMHKFTFFSVYCSRGHLCPVDTGLIEKNVELYFSGVAKAIHEENPSVEGGVNGKNLGPINQWWISGFDGGEKALIGFSTAFAEYFLMEPSPEYAPIFGLMQEKIYISKIVVEFLQSNPDAVYEDLINKIETTVPPSAINVNRFTEDSLLRHAQFVVSQVESYDDAKDDDETPIFLSPCMRSLIHLAGVSLGQRRATRRTVINSAKVKRKGPTKATTTKLVYQIFDTFFSEQIEKDDKEDKENTMKRRRCGVCEVCQQPECGKCKACKDMVKFGGTGRSKQACLKRRCPNLAVKEADEDEEADDDIPELPSPKKLHQGKKKKQNKDRISWLGEPVKIEENRTYYWKVSIDEETLEVGDCVSVIPDDPSKPLYLARVTALWEDKNGQMFHAHWFCAGTDTVLGATSDPLELFLVGECENMQLSYIHSKVKVIYRGPSPNWAMEGGMDPEAMLPGAEDGKTYFYQFWYSQDYARFESPPKTQPAEDNKHKFCLSCIRLAELRQKEMPKVLEQLEEVDGRVYCSSITKNGVVYRLGDSVYLPPEAFTFNIKMASPMKRSKRDPVNENPVPRDTYRKYSDYIKGSNLDAPEPYRIGRIKEIYCGKKKGGKVNEADIKIRLYKFYRPENTHKSIQATYHADINLLYWSDEEAVVDFSDVQGRCTVEYGEDLLESIQDYSQGGPDRFYFLEAYNSKTKSFEDPPNHARSPGNKGKGKGKGKGKGKPQVSEPKEPEAAIKLPKLRTLDVFSGCGGLTEGFHQAGISETLWAIEMWEPAAQAFRLNNPGTTVFTEDCNVLLKLVMAGEVTNSLGQRLPQKGDVEMLCGGPPCQGFSGMNRFNSRTYSKFKNSLVVSFLSYCDYYRPRFFLLENVRNFVSFRRSMVLKLTLRCLVRMGYQCTFGVLQAGQYGVAQTRRRAIILAAAPGEKLPLFPEPLHVFAPRACQLSVVVDDKKFVSNITRLSSGPFRTITMRDTMSDLPEIQNGASAPEISYKWRATVLVPEAAARVALPAHPQGPYPQVHERAGGCRMRHIPLSPGSDWRDLPNIQVRLRDGVITNKLRYTFHDTKNGCSSTGALRGVCSCAEGKTCDPASRQFNTLIPWCLPHTGNRHNHWAGLYGRLEWDGFFSTTVTNPEPMGKQGRVLHPEQHRVVSVRECARSQGFPDTYRLFGNILDRHRQVGNAVPPPLAKAIGLEIKLCLLASAQESASAAVKGKEETTTED.

Positions 1-145 (MPARTAPARV…RRSKSDSETM (145 aa)) are interaction with DNMT3A. Interaction with the PRC2/EED-EZH2 complex regions lie at residues 1–342 (MPAR…VERK) and 304–610 (TPEP…TVIN). Serine 15 is modified (phosphoserine). Positions 16 to 109 (PAGSLPDHVR…TQKANGCPAN (94 aa)) constitute a DMAP1-binding domain. At lysine 70 the chain carries N6,N6-dimethyllysine; by EHMT2. The interval 100 to 360 (TQKANGCPAN…IPKLNPPQCP (261 aa)) is disordered. The span at 126–137 (PRSRPKPRGPRR) shows a compositional bias: basic residues. At serine 138 the chain carries Phosphoserine. At lysine 139 the chain carries N6-methyllysine; by SETD7. At serine 140 the chain carries Phosphoserine; by PKB/AKT1. The segment at 146–213 (IEASSSSVAT…TESRASRAGE (68 aa)) is interaction with DNMT3B. 2 positions are modified to phosphoserine: serine 149 and serine 151. Positions 149 to 166 (SSSSVATRRTTRQTTITS) are enriched in low complexity. Position 163 is a phosphothreonine (threonine 163). Lysine 169 is subject to N6-acetyllysine. The Nuclear localization signal motif lies at 173 to 200 (KRKPKEDSEKGNANESAAEERDQDKKRR). Basic and acidic residues-rich tracts occupy residues 176–197 (PKED…DQDK), 207–222 (RASR…ERVR), 237–269 (DDRR…THLD), and 276–300 (KDKR…KEEV). Threonine 304 is subject to Phosphothreonine. The tract at residues 327 to 556 (KPEPLSIPVQ…NVNRFTEDSL (230 aa)) is DNA replication foci-targeting sequence. Zn(2+)-binding residues include cysteine 359 and cysteine 362. At lysine 372 the chain carries N6-acetyllysine. Phosphoserine is present on serine 400. Residues cysteine 420 and histidine 424 each contribute to the Zn(2+) site. Phosphoserine is present on residues serine 515 and serine 555. The CXXC-type zinc finger occupies 650–696 (NTMKRRRCGVCEVCQQPECGKCKACKDMVKFGGTGRSKQACLKRRCP). Cysteine 657, cysteine 660, cysteine 663, cysteine 668, cysteine 671, cysteine 674, cysteine 690, and cysteine 695 together coordinate Zn(2+). An autoinhibitory linker region spans residues 697–758 (NLAVKEADED…TYYWKVSIDE (62 aa)). The tract at residues 702–733 (EADEDEEADDDIPELPSPKKLHQGKKKKQNKD) is disordered. Positions 703–714 (ADEDEEADDDIP) are enriched in acidic residues. Serine 718 bears the Phosphoserine mark. Residues 720–731 (KKLHQGKKKKQN) show a composition bias toward basic residues. Serine 736 carries the phosphoserine modification. Lysine 753 carries the N6-acetyllysine modification. A BAH 1 domain is found at 759–884 (ETLEVGDCVS…QDYARFESPP (126 aa)). Residue serine 882 is modified to Phosphoserine. Residues lysine 895, lysine 961, and lysine 980 each carry the N6-acetyllysine modification. Residues 977 to 1105 (TYRKYSDYIK…SKTKSFEDPP (129 aa)) form the BAH 2 domain. The segment at 1099–1138 (KSFEDPPNHARSPGNKGKGKGKGKGKGKPQVSEPKEPEAA) is disordered. 6 repeat units span residues 1114–1115 (KG), 1116–1117 (KG), 1118–1119 (KG), 1120–1121 (KG), 1122–1123 (KG), and 1124–1125 (KG). The segment at 1114-1127 (KGKGKGKGKGKGKP) is 7 X 2 AA tandem repeats of K-G. Positions 1115–1125 (GKGKGKGKGKG) are enriched in basic residues. 6 positions are modified to N6-acetyllysine: lysine 1116, lysine 1118, lysine 1120, lysine 1122, lysine 1124, and lysine 1126. Residues 1126–1127 (KP) form a 7; approximate repeat. An interaction with the PRC2/EED-EZH2 complex region spans residues 1126-1622 (KPQVSEPKEP…KGKEETTTED (497 aa)). One can recognise an SAM-dependent MTase C5-type domain in the interval 1144-1603 (LRTLDVFSGC…LEIKLCLLAS (460 aa)). Positions 1144 to 1622 (LRTLDVFSGC…KGKEETTTED (479 aa)) are catalytic. Residues serine 1151, 1155 to 1156 (GL), 1173 to 1174 (EM), 1195 to 1196 (DC), and cysteine 1196 each bind S-adenosyl-L-methionine. Residue cysteine 1231 is part of the active site. Lysine 1354 bears the N6-acetyllysine mark. Serine 1436 bears the Phosphoserine mark. Asparagine 1582 and valine 1584 together coordinate S-adenosyl-L-methionine. Lysine 1613 participates in a covalent cross-link: Glycyl lysine isopeptide (Lys-Gly) (interchain with G-Cter in SUMO2).

This sequence belongs to the class I-like SAM-binding methyltransferase superfamily. C5-methyltransferase family. Homodimer. Forms a stable complex with E2F1, BB1 and HDAC1. Forms a complex with DMAP1 and HDAC2, with direct interaction. Interacts with the PRC2/EED-EZH2 complex. Probably part of a corepressor complex containing ZNF304, TRIM28, SETDB1 and DNMT1. Interacts with UHRF1; promoting its recruitment to hemimethylated DNA. Interacts with USP7, promoting its deubiquitination. Interacts with PCNA. Interacts with MBD2 and MBD3. Interacts with DNMT3A and DNMT3B. Interacts with UBC9. Interacts with CSNK1D. Interacts with HDAC1. Interacts with BAZ2A/TIP5. Interacts with SIRT7. Interacts with ZNF263; recruited to the SIX3 promoter along with other proteins involved in chromatin modification and transcriptional corepression where it contributes to transcriptional repression. Interacts with L3MBTL3 and DCAF5; the interaction requires DNMT1 methylation at Lys-139 and is necessary to target DNMT1 for ubiquitination by the CRL4-DCAF5 E3 ubiquitin ligase complex and proteasomal degradation. Interacts with PHF20L1; the interaction requires DNMT1 methylation at Lys-139 and protects DNMT1 from ubiquitination and proteasomal degradation. In terms of processing, sumoylated; sumoylation increases activity. Acetylation on multiple lysines, mainly by KAT2B/PCAF, regulates cell cycle G(2)/M transition. Deacetylation of Lys-1116 and Lys-1354 by SIRT1 increases methyltransferase activity. Post-translationally, phosphorylation of Ser-151 by CDKs is important for enzymatic activity and protein stability. Phosphorylation of Ser-140 by AKT1 prevents methylation by SETD7 thereby increasing DNMT1 stability. In terms of processing, methylation at Lys-139 by SETD7 is necessary for the regulation of DNMT1 proteasomal degradation. Ubiquitinated by UHRF1; interaction with USP7 counteracts ubiquitination by UHRF1 by promoting deubiquitination and preventing degradation by the proteasome. In terms of tissue distribution, isoforms 0 and 8 are highly expressed in placenta, brain, lung, spleen, kidney, heart, and at much lower levels in liver. Isoform 1 is expressed in cerebellum, isoform 2 in muscle and testis, isoform 3 in lung, isoform 4 in spleen and brain, and isoform 5 in brain.

The protein resides in the nucleus. It carries out the reaction a 2'-deoxycytidine in DNA + S-adenosyl-L-methionine = a 5-methyl-2'-deoxycytidine in DNA + S-adenosyl-L-homocysteine + H(+). In terms of biological role, methylates CpG residues. Preferentially methylates hemimethylated DNA. Associates with DNA replication sites in S phase maintaining the methylation pattern in the newly synthesized strand, that is essential for epigenetic inheritance. Associates with chromatin during G2 and M phases to maintain DNA methylation independently of replication. It is responsible for maintaining methylation patterns established in development. DNA methylation is coordinated with methylation of histones. Mediates transcriptional repression by direct binding to HDAC2. In association with DNMT3B and via the recruitment of CTCFL/BORIS, involved in activation of BAG1 gene expression by modulating dimethylation of promoter histone H3 at H3K4 and H3K9. Probably forms a corepressor complex required for activated KRAS-mediated promoter hypermethylation and transcriptional silencing of tumor suppressor genes (TSGs) or other tumor-related genes in colorectal cancer (CRC) cells. Also required to maintain a transcriptionally repressive state of genes in undifferentiated embryonic stem cells (ESCs). Associates at promoter regions of tumor suppressor genes (TSGs) leading to their gene silencing. Promotes tumor growth. This is DNA (cytosine-5)-methyltransferase 1 (Dnmt1) from Rattus norvegicus (Rat).